A 154-amino-acid polypeptide reads, in one-letter code: 6,7-dimethyl-8-ribityllumazine synthase (154 aa).

5-amino-6-(D-ribitylamino)uracil contacts are provided by residues phenylalanine 22, 56 to 58, and 80 to 82; these read AFE and AVI. Residue 85-86 participates in (2S)-2-hydroxy-3-oxobutyl phosphate binding; that stretch reads AT. Histidine 88 (proton donor) is an active-site residue. Phenylalanine 113 contacts 5-amino-6-(D-ribitylamino)uracil. Arginine 127 is a binding site for (2S)-2-hydroxy-3-oxobutyl phosphate.

This sequence belongs to the DMRL synthase family. In terms of assembly, forms an icosahedral capsid composed of 60 subunits, arranged as a dodecamer of pentamers.

The catalysed reaction is (2S)-2-hydroxy-3-oxobutyl phosphate + 5-amino-6-(D-ribitylamino)uracil = 6,7-dimethyl-8-(1-D-ribityl)lumazine + phosphate + 2 H2O + H(+). It functions in the pathway cofactor biosynthesis; riboflavin biosynthesis; riboflavin from 2-hydroxy-3-oxobutyl phosphate and 5-amino-6-(D-ribitylamino)uracil: step 1/2. Catalyzes the formation of 6,7-dimethyl-8-ribityllumazine by condensation of 5-amino-6-(D-ribitylamino)uracil with 3,4-dihydroxy-2-butanone 4-phosphate. This is the penultimate step in the biosynthesis of riboflavin. The chain is 6,7-dimethyl-8-ribityllumazine synthase from Geobacillus sp. (strain WCH70).